Consider the following 411-residue polypeptide: Probable glutamate dehydrogenase 3 (411 aa).

Lysine 102 is an active-site residue.

It belongs to the Glu/Leu/Phe/Val dehydrogenases family.

The catalysed reaction is L-glutamate + NAD(+) + H2O = 2-oxoglutarate + NH4(+) + NADH + H(+). The enzyme catalyses L-glutamate + NADP(+) + H2O = 2-oxoglutarate + NH4(+) + NADPH + H(+). In Arabidopsis thaliana (Mouse-ear cress), this protein is Probable glutamate dehydrogenase 3 (GSH3).